Here is a 496-residue protein sequence, read N- to C-terminus: Glycerol kinase (496 aa).

Thr-12 lines the ADP pocket. Positions 12, 13, and 14 each coordinate ATP. Thr-12 is a sn-glycerol 3-phosphate binding site. Arg-16 lines the ADP pocket. Residues Arg-82, Glu-83, and Tyr-134 each coordinate sn-glycerol 3-phosphate. Residues Arg-82, Glu-83, and Tyr-134 each contribute to the glycerol site. Residue His-230 is modified to Phosphohistidine; by HPr. Asp-244 lines the sn-glycerol 3-phosphate pocket. Glycerol contacts are provided by Asp-244 and Gln-245. Positions 266 and 309 each coordinate ADP. Thr-266, Gly-309, Gln-313, and Gly-410 together coordinate ATP. Residues Gly-410 and Asn-414 each coordinate ADP.

Belongs to the FGGY kinase family. Homotetramer and homodimer (in equilibrium). In terms of processing, the phosphoenolpyruvate-dependent sugar phosphotransferase system (PTS), including enzyme I, and histidine-containing protein (HPr) are required for the phosphorylation, which leads to the activation of the enzyme.

The catalysed reaction is glycerol + ATP = sn-glycerol 3-phosphate + ADP + H(+). The protein operates within polyol metabolism; glycerol degradation via glycerol kinase pathway; sn-glycerol 3-phosphate from glycerol: step 1/1. Its activity is regulated as follows. Activated by phosphorylation and inhibited by fructose 1,6-bisphosphate (FBP). Key enzyme in the regulation of glycerol uptake and metabolism. Catalyzes the phosphorylation of glycerol to yield sn-glycerol 3-phosphate. The chain is Glycerol kinase from Bacillus thuringiensis subsp. konkukian (strain 97-27).